The sequence spans 277 residues: Large ribosomal subunit protein uL2 (277 aa).

The disordered stretch occupies residues 222–277 (GVAMNPVDHPHGGGEGRTSGGRHPVSPWGKSTKGKRTRSNKATDKFIMHTRHQRKK).

This sequence belongs to the universal ribosomal protein uL2 family. As to quaternary structure, part of the 50S ribosomal subunit. Forms a bridge to the 30S subunit in the 70S ribosome.

Its function is as follows. One of the primary rRNA binding proteins. Required for association of the 30S and 50S subunits to form the 70S ribosome, for tRNA binding and peptide bond formation. It has been suggested to have peptidyltransferase activity; this is somewhat controversial. Makes several contacts with the 16S rRNA in the 70S ribosome. This chain is Large ribosomal subunit protein uL2, found in Bartonella quintana (strain Toulouse) (Rochalimaea quintana).